The following is a 24-amino-acid chain: Small ribosomal subunit protein uS19c (24 aa).

This sequence belongs to the universal ribosomal protein uS19 family.

It localises to the plastid. The protein localises to the chloroplast. Functionally, protein S19 forms a complex with S13 that binds strongly to the 16S ribosomal RNA. The polypeptide is Small ribosomal subunit protein uS19c (rps19) (Petunia hybrida (Petunia)).